A 405-amino-acid polypeptide reads, in one-letter code: Corticosteroid-binding globulin (405 aa).

An N-terminal signal peptide occupies residues Met1–Ala22. 3 N-linked (GlcNAc...) asparagine glycosylation sites follow: Asn31, Asn96, and Asn176. Gln254 contacts cortisol. A glycan (N-linked (GlcNAc...) asparagine) is linked at Asn260. Cortisol is bound at residue Asn286. 2 N-linked (GlcNAc...) asparagine glycosylation sites follow: Asn330 and Asn369. Cortisol-binding residues include His390 and Trp393.

This sequence belongs to the serpin family. In terms of processing, N-glycosylated; binds 5 oligosaccharide chains. Glycosylation in position Asn-260 is needed for steroid binding. Plasma; synthesized in liver. Has also been identified in a number of glycocorticoid responsive cells.

The protein localises to the secreted. In terms of biological role, major transport protein for glucocorticoids and progestins in the blood of almost all vertebrate species. This chain is Corticosteroid-binding globulin (SERPINA6), found in Homo sapiens (Human).